The primary structure comprises 130 residues: Serum amyloid A-4 protein (130 aa).

Positions 1-18 are cleaved as a signal peptide; it reads MRLATVIVLCSLFLGVSG. The interval 109–130 is disordered; it reads EEWGRSGKNPNHFRPEGLPEKF. Positions 121-130 are enriched in basic and acidic residues; sequence FRPEGLPEKF.

The protein belongs to the SAA family. In terms of assembly, apolipoprotein of the HDL complex. In terms of tissue distribution, expressed by the liver; secreted in plasma.

It is found in the secreted. In terms of biological role, major acute phase reactant. The chain is Serum amyloid A-4 protein from Mus musculus (Mouse).